A 284-amino-acid polypeptide reads, in one-letter code: 4-diphosphocytidyl-2-C-methyl-D-erythritol kinase (284 aa).

Residue Lys-14 is part of the active site. An ATP-binding site is contributed by 98–108 (PMGGGLGGGSS). Asp-140 is an active-site residue.

This sequence belongs to the GHMP kinase family. IspE subfamily.

The catalysed reaction is 4-CDP-2-C-methyl-D-erythritol + ATP = 4-CDP-2-C-methyl-D-erythritol 2-phosphate + ADP + H(+). Its pathway is isoprenoid biosynthesis; isopentenyl diphosphate biosynthesis via DXP pathway; isopentenyl diphosphate from 1-deoxy-D-xylulose 5-phosphate: step 3/6. Functionally, catalyzes the phosphorylation of the position 2 hydroxy group of 4-diphosphocytidyl-2C-methyl-D-erythritol. The protein is 4-diphosphocytidyl-2-C-methyl-D-erythritol kinase of Shewanella oneidensis (strain ATCC 700550 / JCM 31522 / CIP 106686 / LMG 19005 / NCIMB 14063 / MR-1).